A 1052-amino-acid chain; its full sequence is Lateral signaling target protein 2 homolog (1052 aa).

Disordered stretches follow at residues 311–348 (YSSIEAPSPEPNSSNNHNNNNSNSSDSGSAKTSTTSPH), 379–455 (PSML…DSDS), 506–539 (DEFGAEQEQEQQQRQREEQLQPSSEQQEEPSTSA), 551–678 (LRLP…ASSF), and 814–973 (NTID…IPDG). Low complexity-rich tracts occupy residues 312 to 346 (SSIEAPSPEPNSSNNHNNNNSNSSDSGSAKTSTTS), 379 to 392 (PSMLSLSAGSTPTA), and 400 to 419 (PSHSIASTSSAATTSTNPPA). Over residues 422 to 455 (SEDDDDDDEEREDDEEECGMLDSDEQDLNDDSDS) the composition is skewed to acidic residues. Over residues 554-574 (PSSSSENEQTTGSNQQSTIKT) the composition is skewed to polar residues. 2 positions are modified to phosphoserine: Ser-555 and Ser-556. Basic residues-rich tracts occupy residues 588–614 (RQRHHSHHHHHRHHHHHHHHRQHHHQQ) and 625–644 (SHHHHHQTHPHRTSRSARKR). Residues 652-661 (STTAEQQQTI) are compositionally biased toward polar residues. A compositionally biased stretch (low complexity) spans 824–842 (NNNNNNNNNSGSSSSSNSS). At Ser-854 the chain carries Phosphoserine. The span at 872–915 (QQQQQQQAQLQLQMQRQRNNSVGSNSPSSSSSSSSSSEHNSPIS) shows a compositional bias: low complexity. Positions 926–935 (SNSASMPSIG) are enriched in polar residues. The segment covering 936–963 (STATTAAATAAATATTTTSATTTTTTTT) has biased composition (low complexity). The segment at 972 to 1032 (DGKAPRCMSC…VCRECYVREV (61 aa)) adopts an FYVE-type zinc-finger fold. The Zn(2+) site is built by Cys-978, Cys-981, Cys-994, Cys-997, Cys-1002, Cys-1005, Cys-1024, and Cys-1027.

Belongs to the lst-2 family.

Functionally, negative regulator of epidermal growth factor receptor (EGFR) signaling. The sequence is that of Lateral signaling target protein 2 homolog from Drosophila virilis (Fruit fly).